The following is a 264-amino-acid chain: Glutamate racemase (264 aa).

Substrate contacts are provided by residues 10–11 (DS) and 42–43 (YG). Cys73 acts as the Proton donor/acceptor in catalysis. 74–75 (NT) lines the substrate pocket. Residue Cys183 is the Proton donor/acceptor of the active site. 184–185 (TH) contacts substrate.

This sequence belongs to the aspartate/glutamate racemases family.

The catalysed reaction is L-glutamate = D-glutamate. Its pathway is cell wall biogenesis; peptidoglycan biosynthesis. In terms of biological role, provides the (R)-glutamate required for cell wall biosynthesis. The sequence is that of Glutamate racemase from Streptococcus pneumoniae (strain ATCC BAA-255 / R6).